Here is a 4625-residue protein sequence, read N- to C-terminus: MDRRLEWVKEKACLGLGVEPNLFEAAIANPESRARVTAFLDGTVTSSALLFALEEATIYVEEYQEVLAEEQAPEAEDGEGEEHDGQEPGEAGGEGAEGSTAPGDSGDGQPEDAPAAAAEANGANPEDEAAAPADGAADGAAGEGGEEGDGAEGDEPPAPPAPKYVRRVISVPKVVSKLNVALGSLPEELSVFPVFYFILNRSGHVAAEELDSAVEFGLLSEGPSLRILEQMLSSVFVPILVQMSGGDVASGGVLMQSMTDNSHRELLGNMQKFHSQVTQALQQLTGDVTLQLPDFPLEDMDRAAADTDLVMQLEQYMAEWSQVLASVLQRESQKHPTGKGPLAEIEFWRERNAVLSSLYEQLNLPQVKRMILVVEKGSDDRNLMAGFKSQLGELTKLATEARDNVKFLTTLERHFKNIATGPLGGILDTLPPMMNALRMVWIISRHYSDDQRMGSLFQRIAREIGDRVEAAVDLRHIFRMTSADAVELLKVCKSVLEHWLQTYMAMREKIELSGRDARWEFPKQLLFARTNYMAEICTDLIEMVEIVDDFFRFLGPELKTVTGDTAGIDRVVHRVVAMYEPIESISFNVFDYGNQHEWKAAKQQFYADNEDIKEATRELIDTSFRKLRSAEGACELLQSFKSIKSKGAIQKQVMNKFNDILEQFAREIEQTADIFERNKDAPPVTKNQPPVAGAIKWVRSLLERLKRTMAKLLSTEEEIIRTTELGQAVESKFKSFARSVMLTEKKWFSSWSDSINGVAMQHLKQTIFRRSAATNRVEVNFHPDLVRLIRETRYLDRMGFPIPEIALNVALQEDKFLQWLEGLNSMLFKYYESIDQLTPVERELMERKLEELESCLQPGFTILNWNSLGITEFIGTCDKAIATFQQLVKQVQKNSGIIEQVVYAIAGAQLVTEPEEGAEVMDLQEFYEDIERQRLAALESLVKKYRTISPLLGKIEEVVAGTNSGKSPALSSYYSFWERAIFNALNTMVLCAMTKLQDMIEQRSKHAEGGRKPPLFKVTVSLQSVDVVVQPPMTEVNKALGRLVRSLVESTKAFVRWMDGTCVETPEQRGATDDDEPIVFTFYWDVAANPQVIKTMLNLNQSIQRAITSVNKYAESWRRHQALWKTDKNSVLDKFKARDPSAAQFEDKLSKYAKMATEISAQAKDFDQDFIRVSCHALASSVCDEAQAWVRAIAQTMRELDAVTESQLRDKIAKYQTALHRPPDTLEELKQVLNTVNTIRGESMVMELRYADLEERYRTRLLYATNPEEESQCAHELASASQVRALWTELLNEAEAVDWSLEETKKKFSETTRSQVSDFAAITAELWEKFRTTGPGLPTVELASGLDELHKYESNLADALRQREQLVLAEKLFGMEITAYPELAQLESEIRKLAQVYGVYAEHAEAVRQYGGQLWSELDVGKMMAGTEAILTKLRKLKSLKLLPVYELVEKEIQGFYNSLPLMKELKSEALRKRHWTRLMEVTGQEFDMDPKTFTLGNMFAMQLHKYAEEIGKITNAAVKELTIESEIRKLADVWREQRFELGKYMKGPEDRGWVLRSTEDILVLLEDMGLNLQSMMASPFVRPFLTEVRAWEQKLSLIGECIEVWMHVQRKWMYLESIFVGSDDIRHQLPAEAKRFDNIDRQWQKIMNDTAKNTVVLDACMADGRLDLLKSLSEQLEVCQKSLSEYLDTKRCAFPRFYFISDDELLSILGTSDPTSVQEHMLKLFDNCAALVFGRGNKTITGMVSSEKEGFEFRNVVPIEGAVELWMTNVEAEMRKTLYQITKEGIFFYAKTPRTKWISENLGMVTLVGSQIWWTWETEDVFRRVRDGNKHSMKEFAAKLTGQLSELTSMVRSDLSNEVRKKVNTLIIIDVHARDIIDTYVRDSIVDAREFAWESQLRFYWDRQQDDILIRQCTGLFKYGYEYMGLNGRLVITALTDRCYMTLTTALTYRLGGAPAGPAGTGKTETTKDLAKSMALLCVVFNCGEGLDYKAMGSIFSGLVQCGAWGCFDEFNRIEAEVLSVVSSQIKNIQEALKNDLTRFQFEGKEISIDPRTGIFITMNPGYAGRTELPDNLKALFRPVTMVVPDLEQICEIMLFSEGFDSAKVLAKKMTVLYKLSREQLSKQHHYDFGLRALKSVLVMAGSLKRGAPDMSEQLVLMRALRDMNLPKFIFDDVPLFLGLINDLFPGMDCPRVRYPQFNDVVEADLADQGFKVLTEPSEQVDKVVQLYEVMMTRHTTMVVGQTGGGKTVILNTLARAQTKLGKKTHLYTINPKAISVAELYGVLDKDTRDWTDGLLSNIFREMNKPLPAERDEARYLVFDGDVDAVWVENMNSVMDDNKLLTLPNGERIRLQNHCKLLFEVFDLQYASPATISRCGMVYVDSRNLGYKPYIYTWLNSRAKQAEVDILRGLFEKYAVPSVDWILEGIDGEELVRRPKQAVPVTNLNMITQLCNLLNATITDHPRMSDPQILEAIFIFCTIWSLGAAIVQRPESPDRDRFDAFVKHIASMGLVDGERVAATQLPARSLYEYCFDTNEGVWKSWRSYLQPYEPPADGAFAKILVPTVDVVRSTWLLNTVVAAGKPCLFVGESGTAKSVTIANYLAHLDSTINIVLNVNFSSRTSSLDVQRAIEDSTEKRTKDTYGPPMGKRLLMFIDDLNMPRVDTYGTQQPIALLKLFIERKGLYDRGKELSWKNMKDVQVVGAMGPPGGARNPVDPRFISLFSVFEIQFPSNENLRTIYQAILSRHLAKLPTDEIRDQLGERLTDVTLELYNFIIDKLPPTPSRFHYIFNLRDLSRIYEGLLLTVGDVFKTPEQFLRLWRNECLRVLHDRLISTDDKRVMTERLEALVQQKFPNLAAHTLASPVLFGDFKNVINELQGEGEVAPRMYDDLGDYNSIKPLFEDVMTNFYNRKRKPMNLVFFEDALEHLTRIHRTLRLPQGNCLLVGVGGSGKQSLSKLAAFTAGCEVFEITLTRGYDELAFREDLKRLYAMLGSDNKRVMFLFTDAHVADEGFLELINNMLTSGMVPALYDGAEKDGLIGSVRAEVEKKGLLATKESCWSYYVDKCRNNLHVVLAMSPVGETLRSRCRNFPGMVNNTVIDWFEPWPEQALTSVASVFLAEEALPEALRPQIVEHMVTVHQSVRTFSTRFLEELRRYNYVTPKNYLDFINNYKRALATNRRTIEDTVTRLSGGLEKLIQAAVEVDAMQKELSQAQVVVAQATKECNELLEVISTNTVDVETKAKAAAIKEAQLKVDSEQIAIEKAEAEAALEEAIPALEEAAAALQDLSKDHITEIRSYAKPPEQVQKVCECVVILRNIKDVSWLGAKSMMADGNFLRSLVEFDKDSLTDKQVKKVKEYFKDPKAPLTYDSLRAISTAGAGLLKWVLAMVNYNNVARTVEPKRKKVAESEKNLRIAQKDLASTKLELQSLNDQLGKLRTQFEEKTAEQQDLKAKADLMERRLIAASKLIAGLGSERERWTRDIADLESRRDRLIGDCLLTSSFLSYTGAFTATYRHAMVYEMWQDDVKARGVPVTQPFRLEALLTSDVETTGWASEGLPSDELSIQNGILTVRANRWPLCIDPQMQAVNWIKSREGKMLEGKVKTFNDSDFLKQLELSIQYGFPFLFENLDEYIDPVIDPVLEKNLVPGDGKFVIKLGDKEVEWDSNFRLYMTSKLSNPHYGPEISGKTMIINYGVTQQGLTEQLLNVTLRHERSDLEEAREALIKQMSENKATLQALEDTLLRELSNAQGNILDNSELIATLESAKLKAVEIAEKLEASKVTAAEIEETRVRYSPAAKRGAILFFVIAGLSAITNMYEYSLASFLVVFNGSLHSSRRDASIEGRLRNIIDTLTYDVYAYTCLGLFERHKLMFSFQMTCKILEGDTPLDPQLLDFFLKGNLSLEKAARRKPFDWFPDAGWQDLMRLVELGQKKIGADGRMHALGSLANDVESDEAAWRTWYDLEAPEEAELPCGYQSFLSDFEKLCLMRCLRMDRVTVGITRFVIGVMGEKYVQPPVLEYRSIYKQSTETTPIVFVLSPGADPAFDVFKLGEEMGFRPGAKLKYMALGQGMGPKAQELIETGATRGLWIMLQNCHLLPTWLKTLEKILEKITKPHADFRLWLTTELTDRFPLGVLQRSLKVVTEPPNGLKLNMRQSYSKITEEVLADCPHQAFRPLVYVLGFFHAVVQERRKYGKLGWNVPYDFNETDFRISMALISTYLTKAWDAQDDLIPWGTLRYLIGEAMYGGRVSDSYDRRILTTYLDEYLGDFLFDTFQPFRFYACKDYEIAIPQTGSRDTYLKAVEALPLVQSPEAFGLNANADISYYTSATKAIWTDLVDLQPRTGGGGGGVAREEFIGGVARDIAAKIPEPFDLPQLRKELGTPSPTQVVLLQELERWNSVLGVMVSSLRDLQRALSGEIGFSSRLEELASSLYNGKLPAMWARLNPATEKALGAWMLWFGRRYRQYKDWTEHGEPKVIWLSGLHIPETYIAALVQAACRDKGWPLDKSTLYTKVTKFTDPYQVSERPKYGCYMSGLYLEGAAWDLEASQLRKQDPKVLVNELPILQVIPIEANKLKLANTFRAPVYVTQARRNAMGVGLVFDADLASAEHSSHWVLQGVALVLNIDQ.

A stem region spans residues 1-1919 (MDRRLEWVKE…LIRQCTGLFK (1919 aa)). The span at 70 to 84 (EQAPEAEDGEGEEHD) shows a compositional bias: acidic residues. The disordered stretch occupies residues 70-163 (EQAPEAEDGE…DEPPAPPAPK (94 aa)). Positions 111–140 (EDAPAAAAEANGANPEDEAAAPADGAADGA) are enriched in low complexity. Over residues 144–155 (GGEEGDGAEGDE) the composition is skewed to acidic residues. 960–967 (AGTNSGKS) lines the ATP pocket. 2 coiled-coil regions span residues 1227-1259 (EELKQVLNTVNTIRGESMVMELRYADLEERYRT) and 1339-1409 (TVEL…AVRQ). 4 AAA regions span residues 1920–2141 (YGYE…VLVM), 2201–2437 (DVVE…RRPK), 2550–2800 (EPPA…IYEG), and 2906–3155 (NFYN…LRRY). ATP contacts are provided by residues 1958–1965 (GPAGTGKT), 2242–2249 (GQTGGGKT), 2588–2595 (GESGTAKS), and 2945–2952 (GVGGSGKQ). 2 coiled-coil regions span residues 3192-3297 (LEKL…IRSY) and 3400-3494 (KRKK…LIGD). A stalk region spans residues 3192-3494 (LEKLIQAAVE…ESRRDRLIGD (303 aa)). AAA regions lie at residues 3542–3773 (LTSD…EIAE) and 3998–4216 (ITRF…LIST). Residue 3680–3687 (GPEISGKT) coordinates ATP. Residues 3701-3788 (EQLLNVTLRH…KVTAAEIEET (88 aa)) are a coiled coil.

It belongs to the dynein heavy chain family. The I1 inner arm complex (also known as the f dynein complex) is a two-headed isoform composed of two heavy chains (1-alpha and 1-beta), three intermediate chains and three light chains. I1 occupies a specific position proximal to the first radial spoke and repeats every 96 nm along the length of the axoneme.

Its subcellular location is the cell projection. It is found in the cilium. The protein resides in the flagellum. The protein localises to the cytoplasm. It localises to the cytoskeleton. Its subcellular location is the flagellum axoneme. Force generating protein of eukaryotic cilia and flagella. Produces force towards the minus ends of microtubules. Dynein has ATPase activity; the force-producing power stroke is thought to occur on release of ADP. Required for assembly of the I1 inner arm complex and its targeting to the appropriate axoneme location. Also required for phototaxis. The polypeptide is Dynein-1-alpha heavy chain, flagellar inner arm I1 complex (DHC1) (Chlamydomonas reinhardtii (Chlamydomonas smithii)).